Consider the following 330-residue polypeptide: Methionyl-tRNA formyltransferase (330 aa).

121 to 124 (SLLP) is a (6S)-5,6,7,8-tetrahydrofolate binding site.

The protein belongs to the Fmt family.

The enzyme catalyses L-methionyl-tRNA(fMet) + (6R)-10-formyltetrahydrofolate = N-formyl-L-methionyl-tRNA(fMet) + (6S)-5,6,7,8-tetrahydrofolate + H(+). Attaches a formyl group to the free amino group of methionyl-tRNA(fMet). The formyl group appears to play a dual role in the initiator identity of N-formylmethionyl-tRNA by promoting its recognition by IF2 and preventing the misappropriation of this tRNA by the elongation apparatus. The polypeptide is Methionyl-tRNA formyltransferase (Burkholderia cenocepacia (strain HI2424)).